Consider the following 172-residue polypeptide: C-phycocyanin beta chain (172 aa).

Position 72 is an N4-methylasparagine (Asn72). Positions 82 and 153 each coordinate (2R,3E)-phycocyanobilin.

The protein belongs to the phycobiliprotein family. Heterodimer of an alpha and a beta subunit, which further assembles into trimers and the trimers into hexamers. The basic functional unit of phycobiliproteins is a ring-shaped hexamer formed from two back-to-back trimers contacting via the alpha chain subunits. The trimers are composed of alpha/beta subunit heterodimers arranged around a three-fold axis of symmetry. The phycoerythrins also contain a gamma subunit which is located in the center of the hexamer. Post-translationally, contains two covalently linked bilin chromophores.

It is found in the plastid. The protein localises to the chloroplast thylakoid membrane. In terms of biological role, light-harvesting photosynthetic bile pigment-protein from the phycobiliprotein complex (phycobilisome, PBS). Phycocyanin is the major phycobiliprotein in the PBS rod. This is C-phycocyanin beta chain (cpcB) from Porphyra purpurea (Red seaweed).